The primary structure comprises 473 residues: Bifunctional NAD(P)H-hydrate repair enzyme Nnr (473 aa).

Residues 1–211 form an NAD(P)H-hydrate epimerase region; it reads MRHYYSVDTI…AHTDVLGFEA (211 aa). A YjeF N-terminal domain is found at 10–205; sequence IRAAEAPLLA…DIGLDLAHTD (196 aa). Residues 62-66 are NADPHX 1; for epimerase activity; that stretch reads DNGGD. Residues Asn-63 and Asp-119 each contribute to the K(+) site. The tract at residues 123 to 129 is NADPHX 1; for epimerase activity; that stretch reads GISGSGP. A (6S)-NADPHX-binding site is contributed by Asp-152. A K(+)-binding site is contributed by Ser-155. A YjeF C-terminal domain is found at 210–473; the sequence is EATDVAARWP…GHIRAALAAL (264 aa). The interval 211 to 473 is ADP-dependent (S)-NAD(P)H-hydrate dehydratase; that stretch reads ATDVAARWPV…GHIRAALAAL (263 aa). Gly-298 contributes to the (6S)-NADPHX binding site. The segment at 348-354 is NADPHX 2; for dehydratase activity; sequence HAGEFAR. Residues 382 to 386 and 402 to 411 contribute to the ADP site; these read KGNVT and QSWAATAGSG. Asp-412 contacts (6S)-NADPHX.

It in the N-terminal section; belongs to the NnrE/AIBP family. The protein in the C-terminal section; belongs to the NnrD/CARKD family. K(+) serves as cofactor.

It catalyses the reaction (6S)-NADHX + ADP = AMP + phosphate + NADH + H(+). The catalysed reaction is (6S)-NADPHX + ADP = AMP + phosphate + NADPH + H(+). The enzyme catalyses (6R)-NADHX = (6S)-NADHX. It carries out the reaction (6R)-NADPHX = (6S)-NADPHX. In terms of biological role, bifunctional enzyme that catalyzes the epimerization of the S- and R-forms of NAD(P)HX and the dehydration of the S-form of NAD(P)HX at the expense of ADP, which is converted to AMP. This allows the repair of both epimers of NAD(P)HX, a damaged form of NAD(P)H that is a result of enzymatic or heat-dependent hydration. In Mycobacterium tuberculosis (strain CDC 1551 / Oshkosh), this protein is Bifunctional NAD(P)H-hydrate repair enzyme Nnr (nnr).